Here is a 509-residue protein sequence, read N- to C-terminus: 2,3-bisphosphoglycerate-independent phosphoglycerate mutase (509 aa).

Mn(2+)-binding residues include Asp14 and Ser64. Ser64 serves as the catalytic Phosphoserine intermediate. Substrate is bound by residues His125, 155–156 (RD), Arg187, Arg193, 259–262 (RADR), and Lys332. Asp399, His403, Asp440, His441, and His459 together coordinate Mn(2+).

This sequence belongs to the BPG-independent phosphoglycerate mutase family. In terms of assembly, monomer. It depends on Mn(2+) as a cofactor.

It carries out the reaction (2R)-2-phosphoglycerate = (2R)-3-phosphoglycerate. The protein operates within carbohydrate degradation; glycolysis; pyruvate from D-glyceraldehyde 3-phosphate: step 3/5. Its function is as follows. Catalyzes the interconversion of 2-phosphoglycerate and 3-phosphoglycerate. This chain is 2,3-bisphosphoglycerate-independent phosphoglycerate mutase, found in Aeromonas salmonicida (strain A449).